The primary structure comprises 165 residues: Large ribosomal subunit protein uL11A (165 aa).

Pro-2 is subject to N,N-dimethylproline; by NTM1. An N6,N6,N6-trimethyllysine; by RKM2 mark is found at Lys-4 and Lys-11. Ser-25 and Ser-38 each carry phosphoserine. N5-methylarginine; by RMT2 is present on Arg-67. Glycyl lysine isopeptide (Lys-Gly) (interchain with G-Cter in ubiquitin) cross-links involve residues Lys-130 and Lys-146.

The protein belongs to the universal ribosomal protein uL11 family. As to quaternary structure, component of the large ribosomal subunit (LSU). Mature yeast ribosomes consist of a small (40S) and a large (60S) subunit. The 40S small subunit contains 1 molecule of ribosomal RNA (18S rRNA) and 33 different proteins (encoded by 57 genes). The large 60S subunit contains 3 rRNA molecules (25S, 5.8S and 5S rRNA) and 46 different proteins (encoded by 81 genes). It appears that the main modified species for L12 contains 6 methyl groups, 2 on Pro-2, 3 on Lys-4 and 1 on Arg-67. Although not reproduced with a second method, methylation at Lys-11 cannot be ruled out.

Its subcellular location is the cytoplasm. Its function is as follows. Component of the ribosome, a large ribonucleoprotein complex responsible for the synthesis of proteins in the cell. The small ribosomal subunit (SSU) binds messenger RNAs (mRNAs) and translates the encoded message by selecting cognate aminoacyl-transfer RNA (tRNA) molecules. The large subunit (LSU) contains the ribosomal catalytic site termed the peptidyl transferase center (PTC), which catalyzes the formation of peptide bonds, thereby polymerizing the amino acids delivered by tRNAs into a polypeptide chain. The nascent polypeptides leave the ribosome through a tunnel in the LSU and interact with protein factors that function in enzymatic processing, targeting, and the membrane insertion of nascent chains at the exit of the ribosomal tunnel. This Saccharomyces cerevisiae (strain ATCC 204508 / S288c) (Baker's yeast) protein is Large ribosomal subunit protein uL11A.